Consider the following 539-residue polypeptide: Chaperonin GroEL (539 aa).

Residues 29-32 (TIGP), 86-90 (DGTTT), glycine 413, 476-478 (NAA), and aspartate 492 each bind ATP.

The protein belongs to the chaperonin (HSP60) family. As to quaternary structure, forms a cylinder of 14 subunits composed of two heptameric rings stacked back-to-back. Interacts with the co-chaperonin GroES.

It is found in the cytoplasm. The enzyme catalyses ATP + H2O + a folded polypeptide = ADP + phosphate + an unfolded polypeptide.. Functionally, together with its co-chaperonin GroES, plays an essential role in assisting protein folding. The GroEL-GroES system forms a nano-cage that allows encapsulation of the non-native substrate proteins and provides a physical environment optimized to promote and accelerate protein folding. The polypeptide is Chaperonin GroEL (Pediococcus pentosaceus (strain ATCC 25745 / CCUG 21536 / LMG 10740 / 183-1w)).